A 195-amino-acid polypeptide reads, in one-letter code: Flavin prenyltransferase UbiX (195 aa).

Residues Gly-17–Ser-19, Ser-43, Ser-94–Thr-97, and Arg-129 contribute to the FMN site. Dimethylallyl phosphate is bound by residues Tyr-159 and Arg-175.

This sequence belongs to the UbiX/PAD1 family.

It catalyses the reaction dimethylallyl phosphate + FMNH2 = prenylated FMNH2 + phosphate. Flavin prenyltransferase that catalyzes the synthesis of the prenylated FMN cofactor (prenyl-FMN) for 4-hydroxy-3-polyprenylbenzoic acid decarboxylase UbiD. The prenyltransferase is metal-independent and links a dimethylallyl moiety from dimethylallyl monophosphate (DMAP) to the flavin N5 and C6 atoms of FMN. This chain is Flavin prenyltransferase UbiX, found in Deinococcus radiodurans (strain ATCC 13939 / DSM 20539 / JCM 16871 / CCUG 27074 / LMG 4051 / NBRC 15346 / NCIMB 9279 / VKM B-1422 / R1).